We begin with the raw amino-acid sequence, 104 residues long: Phosphoribosyl-ATP pyrophosphatase (104 aa).

It belongs to the PRA-PH family.

The protein resides in the cytoplasm. The enzyme catalyses 1-(5-phospho-beta-D-ribosyl)-ATP + H2O = 1-(5-phospho-beta-D-ribosyl)-5'-AMP + diphosphate + H(+). It functions in the pathway amino-acid biosynthesis; L-histidine biosynthesis; L-histidine from 5-phospho-alpha-D-ribose 1-diphosphate: step 2/9. This Streptococcus sanguinis (strain SK36) protein is Phosphoribosyl-ATP pyrophosphatase.